Here is a 611-residue protein sequence, read N- to C-terminus: MKRLPNNPGVYRMFNSDGDVLYVGKARNLKKRVSNYARGIGHSNRITRMIRETVTMEFVVTRTETEALLLEANLIKRSRPRFNVLMRDDKSFPYILLTGGHRAPGIFKHRGARSRKGDYFGPFASAGAVGRTINALQRAFLLRTCTDSVFETRTRPCLLYQIKRCSAPCTYEISDEDYAGLVAEAKAFLSGKSQSVKDHLAAAMQAASADLDFEHAAVYRDRLAALSHVQSHQGINPQTVEEADVFAIHQEGGMTCIQVFFFRTGQNWGNRAYFPKADSSLGPAEVLGAFLSQFYDDKPCPKLVLLSETVEEQSLITEALSTRAGHKVQVSVPQRGEKKELVQHALTNAREALGRRLAETSSQARLLQGLAETFGLPRAPRRIEVYDNSHIMGTNAVGGMIVAGPEGFVKNQYRKFNIRSTDITPGDDFGMMREVIERRFSRLVKEHGTPAGEVENPDAFPAWPDVILIDGGQGQVGAVRQILGEMGISDLVTAIGIAKGVDREAGRERFFMEGKQPFTLPPRDPVLYFIQRLRDEAHRFAIGTHRARRKKEMVRNPLDEIAGIGPTRKRALLHHFGTAKAVSRAAVEDLMQIDGISEAMARAIHDHFRDK.

In terms of domain architecture, GIY-YIG spans 6 to 84; that stretch reads NNPGVYRMFN…IKRSRPRFNV (79 aa). Residues 194-229 enclose the UVR domain; the sequence is QSVKDHLAAAMQAASADLDFEHAAVYRDRLAALSHV.

This sequence belongs to the UvrC family. As to quaternary structure, interacts with UvrB in an incision complex.

The protein localises to the cytoplasm. In terms of biological role, the UvrABC repair system catalyzes the recognition and processing of DNA lesions. UvrC both incises the 5' and 3' sides of the lesion. The N-terminal half is responsible for the 3' incision and the C-terminal half is responsible for the 5' incision. In Brucella suis biovar 1 (strain 1330), this protein is UvrABC system protein C.